A 178-amino-acid polypeptide reads, in one-letter code: ATP-dependent protease subunit HslV (178 aa).

Residue Thr-7 is part of the active site. Residues Gly-162, Cys-165, and Thr-168 each contribute to the Na(+) site.

This sequence belongs to the peptidase T1B family. HslV subfamily. A double ring-shaped homohexamer of HslV is capped on each side by a ring-shaped HslU homohexamer. The assembly of the HslU/HslV complex is dependent on binding of ATP.

The protein resides in the cytoplasm. The enzyme catalyses ATP-dependent cleavage of peptide bonds with broad specificity.. With respect to regulation, allosterically activated by HslU binding. Functionally, protease subunit of a proteasome-like degradation complex believed to be a general protein degrading machinery. The polypeptide is ATP-dependent protease subunit HslV (Leptothrix cholodnii (strain ATCC 51168 / LMG 8142 / SP-6) (Leptothrix discophora (strain SP-6))).